Consider the following 251-residue polypeptide: 3-deoxy-manno-octulosonate cytidylyltransferase (251 aa).

It belongs to the KdsB family.

It localises to the cytoplasm. The catalysed reaction is 3-deoxy-alpha-D-manno-oct-2-ulosonate + CTP = CMP-3-deoxy-beta-D-manno-octulosonate + diphosphate. The protein operates within nucleotide-sugar biosynthesis; CMP-3-deoxy-D-manno-octulosonate biosynthesis; CMP-3-deoxy-D-manno-octulosonate from 3-deoxy-D-manno-octulosonate and CTP: step 1/1. It functions in the pathway bacterial outer membrane biogenesis; lipopolysaccharide biosynthesis. Its function is as follows. Activates KDO (a required 8-carbon sugar) for incorporation into bacterial lipopolysaccharide in Gram-negative bacteria. The sequence is that of 3-deoxy-manno-octulosonate cytidylyltransferase from Vibrio parahaemolyticus serotype O3:K6 (strain RIMD 2210633).